The following is a 148-amino-acid chain: SsrA-binding protein (148 aa).

Residues 129-142 (ETEKKRDWEREKAR) are compositionally biased toward basic and acidic residues. The disordered stretch occupies residues 129–148 (ETEKKRDWEREKARIMRAGT).

The protein belongs to the SmpB family.

Its subcellular location is the cytoplasm. Its function is as follows. Required for rescue of stalled ribosomes mediated by trans-translation. Binds to transfer-messenger RNA (tmRNA), required for stable association of tmRNA with ribosomes. tmRNA and SmpB together mimic tRNA shape, replacing the anticodon stem-loop with SmpB. tmRNA is encoded by the ssrA gene; the 2 termini fold to resemble tRNA(Ala) and it encodes a 'tag peptide', a short internal open reading frame. During trans-translation Ala-aminoacylated tmRNA acts like a tRNA, entering the A-site of stalled ribosomes, displacing the stalled mRNA. The ribosome then switches to translate the ORF on the tmRNA; the nascent peptide is terminated with the 'tag peptide' encoded by the tmRNA and targeted for degradation. The ribosome is freed to recommence translation, which seems to be the essential function of trans-translation. This is SsrA-binding protein from Burkholderia orbicola (strain AU 1054).